Reading from the N-terminus, the 78-residue chain is Large ribosomal subunit protein eL38 (78 aa).

It belongs to the eukaryotic ribosomal protein eL38 family.

The sequence is that of Large ribosomal subunit protein eL38 (RpL38) from Maconellicoccus hirsutus (Pink hibiscus mealybug).